A 785-amino-acid chain; its full sequence is MKLGKVELCRFLQLIALFLCFSGMNQAELPRSRSKPYFQLGRSRTKRSWVWNQFFVLEEYMGSDPLYVGKLHSDVDKGDGFIKYILSGEGASSIFIIDENTGDIHATKRLDREEQAYYTLRAQALDRLTNKPVEPESEFVIKIQDINDNEPKFLDGPYTAGVPEMSPVGTSVVQVTATDADDPTYGNSARVVYSILQGQPYFSVEPKTGVIKTALPNMDREAKDQYLLVIQAKDMVGQNGGLSGTTSVTVTLTDVNDNPPRFPRRSYQYNGPESLPVASVVARIKAADADIGVNAEMEYKIVDGDGLGIFKISPDKDTQEGIITIQKELDFEAKTSYTLRIEAANRDADPRFLSLGPFSDTTTVKIIVEDVDEPPVFSSPLYPMEVSEATQVGHIIGTVAAHDPDSSNSPVRYSIDRNTDLERYFNIDANSGIITTAKSLDRETNPVHNITVLAMESQNPSQVGRGYVAITILDINDNAPEFAMDYETTVCENAQPGQVIQKISAIDKDEPSNGHQFYFSLTTDMANNLNSSLKDNKDNTASILTRRNGFRRQEQSVYYLPIFIVDNGSPSLSSTNTLTIRVCDCDADGIAQTCNAEAYILPAGLSTGALIAILACVLTLLVLILLIVTMKRRKKEPLIFDEERDIRENIVRYDDEGGGEEDTEAFDMAALRNLNVVRDTKTRRDVTPEIQFLSRPTFKNIPDNVIFREFIWERLKEADVDPGAPPYDSLQTYAFEGNGSVAESLGSLDSNSSNSDQNYDYLSDWGPRFKRLAEMYGNGQESLYS.

Residues 1-27 (MKLGKVELCRFLQLIALFLCFSGMNQA) form the signal peptide. The propeptide occupies 28–47 (ELPRSRSKPYFQLGRSRTKR). Over 28 to 607 (ELPRSRSKPY…AYILPAGLST (580 aa)) the chain is Extracellular. 5 Cadherin domains span residues 49–153 (WVWN…EPKF), 154–262 (LDGP…PPRF), 263–377 (PRRS…PPVF), 378–482 (SSPL…APEF), and 482–599 (FAMD…AEAY). Residues Asn449 and Asn530 are each glycosylated (N-linked (GlcNAc...) asparagine). Residues 608-628 (GALIAILACVLTLLVLILLIV) form a helical membrane-spanning segment. Residues 629 to 785 (TMKRRKKEPL…YGNGQESLYS (157 aa)) lie on the Cytoplasmic side of the membrane.

The protein resides in the cell membrane. Cadherins are calcium-dependent cell adhesion proteins. They preferentially interact with themselves in a homophilic manner in connecting cells; cadherins may thus contribute to the sorting of heterogeneous cell types. The chain is Cadherin-7 (Cdh7) from Rattus norvegicus (Rat).